We begin with the raw amino-acid sequence, 98 residues long: NADH-ubiquinone oxidoreductase chain 4L (98 aa).

Helical transmembrane passes span 1 to 21 (MSVV…GLLV), 30 to 50 (LLCL…TVLT), and 61 to 81 (IILL…LVMI).

This sequence belongs to the complex I subunit 4L family. Core subunit of respiratory chain NADH dehydrogenase (Complex I) which is composed of 45 different subunits.

Its subcellular location is the mitochondrion inner membrane. The enzyme catalyses a ubiquinone + NADH + 5 H(+)(in) = a ubiquinol + NAD(+) + 4 H(+)(out). Functionally, core subunit of the mitochondrial membrane respiratory chain NADH dehydrogenase (Complex I) which catalyzes electron transfer from NADH through the respiratory chain, using ubiquinone as an electron acceptor. Part of the enzyme membrane arm which is embedded in the lipid bilayer and involved in proton translocation. This chain is NADH-ubiquinone oxidoreductase chain 4L (MT-ND4L), found in Lontra canadensis (North American river otter).